The following is a 214-amino-acid chain: MTTLLIILAHPHTDDFSWSLATVEEFKKSYQESHPLDKIIIRDLFSEKVPALDNETFAAWKRNKYAPDTLSAEDKNLLHRHEEYLEEFLSADKYVFVNPMYNGFVTAELKQYIDVIAVPRKLFRYTENGPIGLLEGKKSLHIQSAGGFYHNEQDPTHMANDLGAAYIDQTMKMVGLTDENRQQLFVEGYARYPERADELKEKAFTSAENFGKAF.

FMN-binding positions include 17–19 (SWS) and 144–147 (SAGG).

It belongs to the azoreductase type 1 family. Homodimer. The cofactor is FMN.

The catalysed reaction is 2 a quinone + NADH + H(+) = 2 a 1,4-benzosemiquinone + NAD(+). It catalyses the reaction N,N-dimethyl-1,4-phenylenediamine + anthranilate + 2 NAD(+) = 2-(4-dimethylaminophenyl)diazenylbenzoate + 2 NADH + 2 H(+). Its function is as follows. Quinone reductase that provides resistance to thiol-specific stress caused by electrophilic quinones. In terms of biological role, also exhibits azoreductase activity. Catalyzes the reductive cleavage of the azo bond in aromatic azo compounds to the corresponding amines. The protein is FMN-dependent NADH:quinone oxidoreductase 1 of Lactococcus lactis subsp. lactis (strain IL1403) (Streptococcus lactis).